Reading from the N-terminus, the 181-residue chain is ATP-dependent protease subunit HslV (181 aa).

Thr7 is a catalytic residue. Positions 166, 169, and 172 each coordinate Na(+).

Belongs to the peptidase T1B family. HslV subfamily. A double ring-shaped homohexamer of HslV is capped on each side by a ring-shaped HslU homohexamer. The assembly of the HslU/HslV complex is dependent on binding of ATP.

The protein resides in the cytoplasm. The enzyme catalyses ATP-dependent cleavage of peptide bonds with broad specificity.. With respect to regulation, allosterically activated by HslU binding. Functionally, protease subunit of a proteasome-like degradation complex believed to be a general protein degrading machinery. This Acidovorax ebreus (strain TPSY) (Diaphorobacter sp. (strain TPSY)) protein is ATP-dependent protease subunit HslV.